A 64-amino-acid polypeptide reads, in one-letter code: MTIIKSISIIADKSISKTNFIKINNENDSIVIMYTNNQKISKSRGQILDSHIVVNPLIDFNLIF.

This is an uncharacterized protein from Dictyostelium discoideum (Social amoeba).